The following is a 336-amino-acid chain: Adenosine deaminase (336 aa).

Zn(2+) contacts are provided by His-15 and His-17. Positions 17, 19, and 172 each coordinate substrate. Residue His-199 coordinates Zn(2+). Glu-202 serves as the catalytic Proton donor. Asp-279 contributes to the Zn(2+) binding site.

It belongs to the metallo-dependent hydrolases superfamily. Adenosine and AMP deaminases family. Adenosine deaminase subfamily. Zn(2+) serves as cofactor.

It carries out the reaction adenosine + H2O + H(+) = inosine + NH4(+). It catalyses the reaction 2'-deoxyadenosine + H2O + H(+) = 2'-deoxyinosine + NH4(+). Catalyzes the hydrolytic deamination of adenosine and 2-deoxyadenosine. The protein is Adenosine deaminase of Streptococcus thermophilus (strain ATCC BAA-250 / LMG 18311).